A 167-amino-acid polypeptide reads, in one-letter code: Epithelial membrane protein 2 (167 aa).

The helical transmembrane segment at 1–21 (MLVLLAFIIAFHITSAALLFI) threads the bilayer. N-linked (GlcNAc...) asparagine glycosylation is found at Asn-44, Asn-47, and Asn-52. Helical transmembrane passes span 67 to 87 (TMIL…LQLF), 95 to 115 (FVLT…AASI), and 143 to 163 (YILA…YLIL).

It belongs to the PMP-22/EMP/MP20 family. In terms of assembly, interacts with PTK2; regulates PTK2 activation and localization. Interacts with ITGB3; regulates the levels of the heterodimer ITGA5-ITGB3 integrin surface expression. Interacts with P2RX7 (via C-terminus). Interacts with ITGB1; the interaction may be direct or indirect and ITGB1 has a heterodimer form. Expressed in ciliary body epithelia, sclera, cornea, and retinal pigment epithelium (at protein level). Expressed in lung and endometrial tissue; expression is particularly abundant in secretory endometrium (at protein level). Expressed in placental villous syncytiotrophoblasts and cytotrophoblasts and on the membrane of interstitial trophoblasts (at protein level).

It is found in the golgi apparatus membrane. The protein localises to the cell membrane. It localises to the apical cell membrane. Its subcellular location is the membrane raft. The protein resides in the cytoplasm. It is found in the nucleus. The protein localises to the perinuclear region. Its function is as follows. Functions as a key regulator of cell membrane composition by regulating protein surface expression. Also, plays a role in regulation of processes including cell migration, cell proliferation, cell contraction and cell adhesion. Regulates transepithelial migration of neutrophils into the alveolar lumen, potentially via mediation of cell surface expression of adhesion markers and lipid raft formation. Negatively regulates caveolae formation by reducing CAV1 expression and CAV1 amount by increasing lysosomal degradation. Facilitates surface trafficking and formation of lipid rafts bearing GPI-anchor proteins. Regulates surface expression of MHC1 and ICAM1 proteins increasing susceptibility to T-cell mediated cytotoxicity. Regulates the plasma membrane expression of the integrin heterodimers ITGA6-ITGB1, ITGA5-ITGB3 and ITGA5-ITGB1 resulting in modulation of cell-matrix adhesion. Also regulates many processes through PTK2. Regulates blood vessel endothelial cell migration and angiogenesis by regulating VEGF protein expression through PTK2 activation. Regulates cell migration and cell contraction through PTK2 and SRC activation. Regulates focal adhesion density, F-actin conformation and cell adhesion capacity through interaction with PTK2. Positively regulates cell proliferation. Plays a role during cell death and cell blebbing. Promotes angiogenesis and vasculogenesis through induction of VEGFA via a HIF1A-dependent pathway. Also plays a role in embryo implantation by regulating surface trafficking of integrin heterodimer ITGA5-ITGB3. Plays a role in placental angiogenesis and uterine natural killer cell regulation at the maternal-fetal placental interface, however not required in the maternal tissues for a viable pregnancy. Involved in the early stages of embryogenic development and cardiogenesis, potentially via regulation of epithelial-mesenchymal transition timing. May play a role in glomerular filtration. This chain is Epithelial membrane protein 2 (EMP2), found in Homo sapiens (Human).